A 324-amino-acid polypeptide reads, in one-letter code: Phospho-N-acetylmuramoyl-pentapeptide-transferase (324 aa).

A run of 10 helical transmembrane segments spans residues 5–25, 52–72, 77–97, 117–137, 147–167, 176–196, 203–223, 227–247, 250–270, and 302–322; these read VILF…PIFI, PTMG…VMTM, VSMN…LGFL, LIGQ…QGMP, LSFD…VGGS, LDGL…ILAW, VAIF…FNAH, VFMG…IAIL, LEIL…SVIL, and VVVT…YIEV.

It belongs to the glycosyltransferase 4 family. MraY subfamily. The cofactor is Mg(2+).

Its subcellular location is the cell membrane. It catalyses the reaction UDP-N-acetyl-alpha-D-muramoyl-L-alanyl-gamma-D-glutamyl-meso-2,6-diaminopimeloyl-D-alanyl-D-alanine + di-trans,octa-cis-undecaprenyl phosphate = di-trans,octa-cis-undecaprenyl diphospho-N-acetyl-alpha-D-muramoyl-L-alanyl-D-glutamyl-meso-2,6-diaminopimeloyl-D-alanyl-D-alanine + UMP. It functions in the pathway cell wall biogenesis; peptidoglycan biosynthesis. Catalyzes the initial step of the lipid cycle reactions in the biosynthesis of the cell wall peptidoglycan: transfers peptidoglycan precursor phospho-MurNAc-pentapeptide from UDP-MurNAc-pentapeptide onto the lipid carrier undecaprenyl phosphate, yielding undecaprenyl-pyrophosphoryl-MurNAc-pentapeptide, known as lipid I. This is Phospho-N-acetylmuramoyl-pentapeptide-transferase from Bacillus licheniformis (strain ATCC 14580 / DSM 13 / JCM 2505 / CCUG 7422 / NBRC 12200 / NCIMB 9375 / NCTC 10341 / NRRL NRS-1264 / Gibson 46).